Reading from the N-terminus, the 151-residue chain is Putative pre-16S rRNA nuclease (151 aa).

Belongs to the YqgF nuclease family.

It localises to the cytoplasm. Its function is as follows. Could be a nuclease involved in processing of the 5'-end of pre-16S rRNA. This chain is Putative pre-16S rRNA nuclease, found in Nostoc sp. (strain PCC 7120 / SAG 25.82 / UTEX 2576).